The sequence spans 230 residues: Ureidoacrylate amidohydrolase RutB (230 aa).

Aspartate 24 (proton acceptor) is an active-site residue. Residue lysine 133 is part of the active site. The Nucleophile role is filled by cysteine 166.

The protein belongs to the isochorismatase family. RutB subfamily.

The enzyme catalyses (Z)-3-ureidoacrylate + H2O + H(+) = (Z)-3-aminoacrylate + NH4(+) + CO2. It catalyses the reaction (Z)-3-ureidoacrylate + H2O = (Z)-3-aminoacrylate + carbamate + H(+). It carries out the reaction (Z)-2-methylureidoacrylate + H2O + H(+) = (Z)-2-methylaminoacrylate + NH4(+) + CO2. Its function is as follows. Hydrolyzes ureidoacrylate to form aminoacrylate and carbamate. The carbamate hydrolyzes spontaneously, thereby releasing one of the nitrogen atoms of the pyrimidine ring as ammonia and one of its carbon atoms as CO2. The chain is Ureidoacrylate amidohydrolase RutB from Escherichia coli O157:H7.